The primary structure comprises 115 residues: U3-lycotoxin-Ls1k (115 aa).

The signal sequence occupies residues 1–20 (MKFVLLFGVLLVALFSYSSA). A propeptide spanning residues 21–44 (EMLDDFGQADEDELLSLIEKEEAR) is cleaved from the precursor. 4 disulfide bridges follow: cysteine 48–cysteine 63, cysteine 55–cysteine 72, cysteine 62–cysteine 87, and cysteine 74–cysteine 85.

This sequence belongs to the neurotoxin 19 (CSTX) family. 01 subfamily. Expressed by the venom gland.

Its subcellular location is the secreted. The protein is U3-lycotoxin-Ls1k of Lycosa singoriensis (Wolf spider).